The sequence spans 181 residues: Phospholipase A2 inhibitor gamma subunit B (181 aa).

8 disulfides stabilise this stretch: Cys3–Cys27, Cys6–Cys13, Cys20–Cys48, Cys54–Cys75, Cys76–Cys81, Cys101–Cys126, Cys119–Cys146, and Cys152–Cys172.

It belongs to the CNF-like-inhibitor family. Heterotrimer of 2 subunits A and 1 subunit B. As to expression, expressed by the liver.

The protein localises to the secreted. Its function is as follows. Strongly inhibits its own venom PLA2 and all other PLA2s tested including Elapid, Crotalid and Viperid venom PLA2s, as well as honeybee PLA2s. This chain is Phospholipase A2 inhibitor gamma subunit B, found in Laticauda semifasciata (Black-banded sea krait).